The sequence spans 772 residues: Probable beta-glucosidase M (772 aa).

The signal sequence occupies residues Met1–Ala20. N-linked (GlcNAc...) asparagine glycosylation occurs at Asn259. Asp287 is a catalytic residue. Asn315, Asn322, Asn438, Asn523, Asn547, Asn574, and Asn586 each carry an N-linked (GlcNAc...) asparagine glycan.

Belongs to the glycosyl hydrolase 3 family.

Its subcellular location is the secreted. It catalyses the reaction Hydrolysis of terminal, non-reducing beta-D-glucosyl residues with release of beta-D-glucose.. Its pathway is glycan metabolism; cellulose degradation. In terms of biological role, beta-glucosidases are one of a number of cellulolytic enzymes involved in the degradation of cellulosic biomass. Catalyzes the last step releasing glucose from the inhibitory cellobiose. The protein is Probable beta-glucosidase M (bglM) of Emericella nidulans (strain FGSC A4 / ATCC 38163 / CBS 112.46 / NRRL 194 / M139) (Aspergillus nidulans).